The following is a 483-amino-acid chain: MLPTSVSRSLYLKTFRSHLLRAPQIVLKRMSSSIDISKINSWNKEFQSDLTHQLATTVLKNYNADDALLNKTRLQKQDNRVFNTVVSTDSTPVTNQKSSGRCWLFAATNQLRLNVLSELNLKEFELSQAYLFFYDKLEKANYFLDQIVSSADQDIDSRLVQYLLAAPTEDGGQYSMFLNLVKKYGLIPKDLYGDLPYSTTASRKWNSLLTTKLREFAETLRTALKERSADDSIIVTLREQMQREIFRLMSLFMDIPPVQPNEQFTWEYVDKDKKIHTIKSTPLEFASKYAKLDPSTPVSLINDPRHPYGKLIKIDRLGNVLGGDAVIYLNVDNETLSKLVVKRLQNNKAVFFGSHTPKFMDKKTGVMDIELWNYPAIGYNLPQQKASRIRYHESLMTHAMLITGCHVDETSKLPLRYRVENSWGKDSGKDGLYVMTQKYFEEYCFQIVVDINELPKELASKFTSGKEEPIVLPIWDPMGALAK.

Residues Met-1–Met-30 constitute a mitochondrion transit peptide. Residues Cys-102, His-398, and Asn-421 contribute to the active site. Lys-483 is a propeptide (removed in mature form; by autocatalysis).

It belongs to the peptidase C1 family. In terms of assembly, homohexamer. Binds to nucleic acids. Binds single-stranded DNA and RNA with higher affinity than double-stranded DNA. Post-translationally, the N-terminus of isoform Cytoplasmic is blocked.

It is found in the mitochondrion. It localises to the cytoplasm. The catalysed reaction is Inactivates bleomycin B2 (a cytotoxic glycometallopeptide) by hydrolysis of a carboxyamide bond of beta-aminoalanine, but also shows general aminopeptidase activity. The specificity varies somewhat with source, but amino acid arylamides of Met, Leu and Ala are preferred.. Its activity is regulated as follows. Inhibited by E64, a specific inhibitor of cysteine proteases, N-ethylmaleimide, iodacetamide, and mercury and zinc ions. The normal physiological role of the enzyme is unknown, but it is not essential for the viability of yeast cells. Has aminopeptidase activity, shortening substrate peptides sequentially by 1 amino acid. Has bleomycin hydrolase activity, which can protect the cell from the toxic effects of bleomycin. Has homocysteine-thiolactonase activity, protecting the cell against homocysteine toxicity. Acts as a repressor in the GAL4 regulatory system, but this does not require either the peptidase or nucleic acid-binding activities. This is Cysteine proteinase 1, mitochondrial (LAP3) from Saccharomyces cerevisiae (strain AWRI1631) (Baker's yeast).